The sequence spans 299 residues: MHVVILGSAAGGGVPQWNCRCSICSLAWAGDSRVRPRTQSSIAVSPDGERWLLLNASPDIRQQIQANPQMHPREGLRHSPIHAVLLTNGDVDHVAGLLTLREGQPFTLYATPGILASVSDNRVFDVMAADVVKRQTIALNETFEPVPGLSVTLFSVPGKVPLWLEDASMEIGAETETTVGTMIEAGGKRLAYIPGCARVTEDLKARIAGADALLFDGTVLEDDDMIRAGVGTKTGWRMGHIQMNGETGSIASLADIEIGRRVFVHINNTNPVLIEDSYERASVEARGWTVAHDGLTLDL.

This sequence belongs to the PqqB family.

It participates in cofactor biosynthesis; pyrroloquinoline quinone biosynthesis. In terms of biological role, may be involved in the transport of PQQ or its precursor to the periplasm. This is Coenzyme PQQ synthesis protein B from Methylorubrum extorquens (strain ATCC 14718 / DSM 1338 / JCM 2805 / NCIMB 9133 / AM1) (Methylobacterium extorquens).